The sequence spans 406 residues: Anthranilate 1,2-dioxygenase system ferredoxin--NAD(+) reductase component (406 aa).

An FAD-binding site is contributed by Pro5–Glu37. Gly152 to Ala161 serves as a coordination point for NAD(+).

Belongs to the FAD-dependent oxidoreductase family. As to quaternary structure, part of a multicomponent enzyme system composed of a reductase (AndAa), a ferredoxin (AndAb) and a two-subunit oxygenase component (AndAc and AndAd). The cofactor is FAD.

The catalysed reaction is 2 reduced [2Fe-2S]-[ferredoxin] + NAD(+) + H(+) = 2 oxidized [2Fe-2S]-[ferredoxin] + NADH. Its pathway is aromatic compound metabolism; anthranilate degradation via hydroxylation; catechol from anthranilate: step 1/1. Functionally, part of the multicomponent anthranilate dioxygenase, that converts anthranilate to catechol. Probably transfers electrons from ferredoxin (AndAb) to NADH. This is Anthranilate 1,2-dioxygenase system ferredoxin--NAD(+) reductase component from Burkholderia cepacia (Pseudomonas cepacia).